A 259-amino-acid chain; its full sequence is Leucine-rich repeat-containing protein 61 (259 aa).

LRR repeat units lie at residues 32–53 (SILLLKLRGLGLADLGCLGECL), 54–75 (GLEWLDLSGNALTHLGPLASLR), 76–97 (QLAVLNVSNNRLTGLEPLATCE), and 98–119 (NLQSLNAAGNLLATPGQLQCLA). Positions 138 to 178 (NPLCANPSYWAAVRELLPGLKVIDGERVIGRGSEFYQLCRD) constitute an LRRCT domain.

In Homo sapiens (Human), this protein is Leucine-rich repeat-containing protein 61 (LRRC61).